The following is a 490-amino-acid chain: Transcriptional regulator FleQ (490 aa).

L142 is a binding site for 3',3'-c-di-GMP. ADP-binding positions include V147 and 177–182; that span reads GTGKEV. Residues 186–189 and 330–341 contribute to the 3',3'-c-di-GMP site; these read NLHY and ELISRMEHEKRG. Residues R334 and R363 each coordinate ADP.

Forms homodimers. Forms homohexamers that inhibit transcription initiation. Interacts with FleN; this complex is formed in the presence as well as in the absence of c-di-GMP or ATP.

With respect to regulation, C-di-GMP interaction leads to active site obstruction, hexameric ring destabilization thus relieving DNA bending and activating gene transcription. Its function is as follows. AAA+ ATPase enhancer-binding protein that acts as a transcription regulator and plays a role in the modulation of mucin adhesion and flagellar gene expression. In addition to flagella genes, also regulates expression of biofilm-related genes. Functions as a transcriptional repressor in the absence of c-di-GMP and as an activator when c-di-GMP is present. The protein is Transcriptional regulator FleQ of Pseudomonas aeruginosa (strain ATCC 15692 / DSM 22644 / CIP 104116 / JCM 14847 / LMG 12228 / 1C / PRS 101 / PAO1).